The following is a 239-amino-acid chain: tRNA (guanine-N(1)-)-methyltransferase (239 aa).

Residues Gly-110 and 129 to 134 (LGDFVL) each bind S-adenosyl-L-methionine.

Belongs to the RNA methyltransferase TrmD family. In terms of assembly, homodimer.

The protein localises to the cytoplasm. The enzyme catalyses guanosine(37) in tRNA + S-adenosyl-L-methionine = N(1)-methylguanosine(37) in tRNA + S-adenosyl-L-homocysteine + H(+). Its function is as follows. Specifically methylates guanosine-37 in various tRNAs. This is tRNA (guanine-N(1)-)-methyltransferase from Clostridium beijerinckii (strain ATCC 51743 / NCIMB 8052) (Clostridium acetobutylicum).